We begin with the raw amino-acid sequence, 455 residues long: Phosphoglucosamine mutase (455 aa).

Residue Ser-108 is the Phosphoserine intermediate of the active site. Mg(2+) is bound by residues Ser-108, Asp-248, Asp-250, and Asp-252. Ser-108 is modified (phosphoserine).

Belongs to the phosphohexose mutase family. Mg(2+) is required as a cofactor. Post-translationally, activated by phosphorylation.

The catalysed reaction is alpha-D-glucosamine 1-phosphate = D-glucosamine 6-phosphate. Catalyzes the conversion of glucosamine-6-phosphate to glucosamine-1-phosphate. The chain is Phosphoglucosamine mutase from Leuconostoc mesenteroides subsp. mesenteroides (strain ATCC 8293 / DSM 20343 / BCRC 11652 / CCM 1803 / JCM 6124 / NCDO 523 / NBRC 100496 / NCIMB 8023 / NCTC 12954 / NRRL B-1118 / 37Y).